The chain runs to 111 residues: Prothymosin alpha-A (111 aa).

The tract at residues 1 to 111 (MSDTAVDASV…IKKQKTDEDD (111 aa)) is disordered. The segment covering 9-42 (SVEKTTKDLKAKEKEVVEEAENGKDKPTNGKAEN) has biased composition (basic and acidic residues). 2 stretches are compositionally biased toward acidic residues: residues 43–81 (EENGEPEVDNEGDEEDEVDEEDEEDEVEGEDDDDDDEVE) and 90–100 (EDDEDDDDDDV). A compositionally biased stretch (basic and acidic residues) spans 101–111 (EIKKQKTDEDD).

Belongs to the pro/parathymosin family.

Its subcellular location is the nucleus. This Xenopus laevis (African clawed frog) protein is Prothymosin alpha-A (ptma-a).